A 242-amino-acid polypeptide reads, in one-letter code: Ribosomal RNA large subunit methyltransferase E (242 aa).

S-adenosyl-L-methionine contacts are provided by Gly64, Trp66, Asp84, Asp100, and Asp125. Lys165 functions as the Proton acceptor in the catalytic mechanism. The tract at residues 198–242 (SSETFLLGRGLKKASPNGLDSRSGTAAEPAPLVPIGTNSMPANGD) is disordered. Over residues 233–242 (GTNSMPANGD) the composition is skewed to polar residues.

The protein belongs to the class I-like SAM-binding methyltransferase superfamily. RNA methyltransferase RlmE family.

It localises to the cytoplasm. It catalyses the reaction uridine(2552) in 23S rRNA + S-adenosyl-L-methionine = 2'-O-methyluridine(2552) in 23S rRNA + S-adenosyl-L-homocysteine + H(+). Its function is as follows. Specifically methylates the uridine in position 2552 of 23S rRNA at the 2'-O position of the ribose in the fully assembled 50S ribosomal subunit. This is Ribosomal RNA large subunit methyltransferase E from Verminephrobacter eiseniae (strain EF01-2).